A 535-amino-acid polypeptide reads, in one-letter code: Bifunctional purine biosynthesis protein PurH (535 aa).

One can recognise an MGS-like domain in the interval 6–151 (TRLPVRRALI…KNHKDVAIVV (146 aa)).

It belongs to the PurH family.

The enzyme catalyses (6R)-10-formyltetrahydrofolate + 5-amino-1-(5-phospho-beta-D-ribosyl)imidazole-4-carboxamide = 5-formamido-1-(5-phospho-D-ribosyl)imidazole-4-carboxamide + (6S)-5,6,7,8-tetrahydrofolate. It carries out the reaction IMP + H2O = 5-formamido-1-(5-phospho-D-ribosyl)imidazole-4-carboxamide. Its pathway is purine metabolism; IMP biosynthesis via de novo pathway; 5-formamido-1-(5-phospho-D-ribosyl)imidazole-4-carboxamide from 5-amino-1-(5-phospho-D-ribosyl)imidazole-4-carboxamide (10-formyl THF route): step 1/1. It functions in the pathway purine metabolism; IMP biosynthesis via de novo pathway; IMP from 5-formamido-1-(5-phospho-D-ribosyl)imidazole-4-carboxamide: step 1/1. This is Bifunctional purine biosynthesis protein PurH from Azotobacter vinelandii (strain DJ / ATCC BAA-1303).